A 120-amino-acid chain; its full sequence is Large ribosomal subunit protein eL18 (120 aa).

The protein belongs to the eukaryotic ribosomal protein eL18 family.

The polypeptide is Large ribosomal subunit protein eL18 (Pyrococcus abyssi (strain GE5 / Orsay)).